The sequence spans 168 residues: uncharacterized protein (168 aa).

4Fe-4S ferredoxin-type domains are found at residues 48 to 78 (KIPKTVIEELCIGCEGCANVCPTKAIEMIPI) and 91 to 122 (KIPKINPEKCVYCLYCHDFCPVFSVFNEISPI). Positions 58, 61, 64, 68, 100, 103, 106, and 110 each coordinate [4Fe-4S] cluster.

This is an uncharacterized protein from Methanocaldococcus jannaschii (strain ATCC 43067 / DSM 2661 / JAL-1 / JCM 10045 / NBRC 100440) (Methanococcus jannaschii).